A 368-amino-acid chain; its full sequence is 4-hydroxy-3-methylbut-2-en-1-yl diphosphate synthase (flavodoxin) (368 aa).

The [4Fe-4S] cluster site is built by Cys-268, Cys-271, Cys-303, and Glu-310.

The protein belongs to the IspG family. Requires [4Fe-4S] cluster as cofactor.

It catalyses the reaction (2E)-4-hydroxy-3-methylbut-2-enyl diphosphate + oxidized [flavodoxin] + H2O + 2 H(+) = 2-C-methyl-D-erythritol 2,4-cyclic diphosphate + reduced [flavodoxin]. The protein operates within isoprenoid biosynthesis; isopentenyl diphosphate biosynthesis via DXP pathway; isopentenyl diphosphate from 1-deoxy-D-xylulose 5-phosphate: step 5/6. Its function is as follows. Converts 2C-methyl-D-erythritol 2,4-cyclodiphosphate (ME-2,4cPP) into 1-hydroxy-2-methyl-2-(E)-butenyl 4-diphosphate. In Listeria monocytogenes serovar 1/2a (strain ATCC BAA-679 / EGD-e), this protein is 4-hydroxy-3-methylbut-2-en-1-yl diphosphate synthase (flavodoxin).